Here is a 313-residue protein sequence, read N- to C-terminus: tRNA dimethylallyltransferase (313 aa).

An ATP-binding site is contributed by Gly-10–Thr-17. A substrate-binding site is contributed by Thr-12 to Thr-17. Interaction with substrate tRNA stretches follow at residues Asp-35 to Met-38, Gln-159 to Arg-163, and Arg-240 to Arg-245.

It belongs to the IPP transferase family. Monomer. The cofactor is Mg(2+).

It carries out the reaction adenosine(37) in tRNA + dimethylallyl diphosphate = N(6)-dimethylallyladenosine(37) in tRNA + diphosphate. In terms of biological role, catalyzes the transfer of a dimethylallyl group onto the adenine at position 37 in tRNAs that read codons beginning with uridine, leading to the formation of N6-(dimethylallyl)adenosine (i(6)A). This chain is tRNA dimethylallyltransferase, found in Legionella pneumophila (strain Paris).